Reading from the N-terminus, the 173-residue chain is Zinc resistance-associated protein homolog (173 aa).

The first 28 residues, 1 to 28, serve as a signal peptide directing secretion; that stretch reads MNSKRIALGIIALATVVSLGTAANNAFA.

This sequence belongs to the ZraP family.

This Nitratidesulfovibrio vulgaris (strain ATCC 29579 / DSM 644 / CCUG 34227 / NCIMB 8303 / VKM B-1760 / Hildenborough) (Desulfovibrio vulgaris) protein is Zinc resistance-associated protein homolog.